A 95-amino-acid polypeptide reads, in one-letter code: Aspartyl/glutamyl-tRNA(Asn/Gln) amidotransferase subunit C (95 aa).

This sequence belongs to the GatC family. Heterotrimer of A, B and C subunits.

It catalyses the reaction L-glutamyl-tRNA(Gln) + L-glutamine + ATP + H2O = L-glutaminyl-tRNA(Gln) + L-glutamate + ADP + phosphate + H(+). It carries out the reaction L-aspartyl-tRNA(Asn) + L-glutamine + ATP + H2O = L-asparaginyl-tRNA(Asn) + L-glutamate + ADP + phosphate + 2 H(+). Functionally, allows the formation of correctly charged Asn-tRNA(Asn) or Gln-tRNA(Gln) through the transamidation of misacylated Asp-tRNA(Asn) or Glu-tRNA(Gln) in organisms which lack either or both of asparaginyl-tRNA or glutaminyl-tRNA synthetases. The reaction takes place in the presence of glutamine and ATP through an activated phospho-Asp-tRNA(Asn) or phospho-Glu-tRNA(Gln). The chain is Aspartyl/glutamyl-tRNA(Asn/Gln) amidotransferase subunit C from Rhodospirillum centenum (strain ATCC 51521 / SW).